A 382-amino-acid polypeptide reads, in one-letter code: MSTWLLPENIADVLPSEARKIEELRRRLLDRFRSYGYEMVMPPLLEYLESLLTSGGADLRLRTFKLVDQLSGRTLGLRADITPQVARIDAHLLNRQGVTRLCYAGHVMHTRPRGLHATREQIQIGAEIYGHAGLEADLEIQQLMLDALHLAGLSRIRLDLGHAGVLAALLARDAQAAERGESLYDALSGKDVPLLNELTDDLGADTRAALRALPNLYGDASVLAEARTRLPVLPEITRALDDLAQLASQAKGVEVAIDLADLRGYAYHSGAMFSAYIDGVPNAIARGGRYDHVGQAYGRSRPATGFSLDLRELARISPVEARGTAILAPWAQDDALGAAVAALRDAGEVVIQALPGHDHVLDEFACDRSLVERNGAWVVEPR.

It belongs to the class-II aminoacyl-tRNA synthetase family. HisZ subfamily. Heteromultimer composed of HisG and HisZ subunits.

The protein resides in the cytoplasm. It participates in amino-acid biosynthesis; L-histidine biosynthesis; L-histidine from 5-phospho-alpha-D-ribose 1-diphosphate: step 1/9. Required for the first step of histidine biosynthesis. May allow the feedback regulation of ATP phosphoribosyltransferase activity by histidine. In Burkholderia cenocepacia (strain HI2424), this protein is ATP phosphoribosyltransferase regulatory subunit.